We begin with the raw amino-acid sequence, 479 residues long: MAKEKKLVEAITSMEEDFTQWYTDVVKKAELMDYSSVKGCMIFKPNGYAIWENIQKNLDAMFKETGVENVYMPMFIPESLLQKEKDHVEGFAPEVAWVTQGGLETLQERLAVRPTSETLFCELFSKTVQSHRDLPKVYNQWCSVVRWEKTTRPFLRSSEFLWQEGHTVHATAEEAEARTVQMLNIYADFCEKYLAIPMVKGRKTDKEKFAGAEATYTIEALMHDGKALQSGTSHNFGDGFPKAFGIQYTDKDNKLQYCHETSWGVSTRLIGAIIMVHGDDSGLVLPPKIAPTQVMVIPIQQQKDGVLDKAYDLKDKLSKDFRVKIDATDKTPGWKFAAQEVQGISTRIEIGPKDIEKNQCVIVRRDTREKIVVSLDEVNEKLAEVLETMQNDMLEKAKAFLASHINDAHDYNEFKAIAETKPGFIRAMWCGDEACENKIKEDTTVTSRCMPFGDQEQISDVCVCCGKPAHKLVYWGKAY.

Belongs to the class-II aminoacyl-tRNA synthetase family. ProS type 3 subfamily. As to quaternary structure, homodimer.

The protein resides in the cytoplasm. It catalyses the reaction tRNA(Pro) + L-proline + ATP = L-prolyl-tRNA(Pro) + AMP + diphosphate. Catalyzes the attachment of proline to tRNA(Pro) in a two-step reaction: proline is first activated by ATP to form Pro-AMP and then transferred to the acceptor end of tRNA(Pro). The chain is Proline--tRNA ligase from Agathobacter rectalis (strain ATCC 33656 / DSM 3377 / JCM 17463 / KCTC 5835 / VPI 0990) (Eubacterium rectale).